A 356-amino-acid polypeptide reads, in one-letter code: Phosphoribosylformylglycinamidine cyclo-ligase (356 aa).

It belongs to the AIR synthase family.

Its subcellular location is the cytoplasm. The catalysed reaction is 2-formamido-N(1)-(5-O-phospho-beta-D-ribosyl)acetamidine + ATP = 5-amino-1-(5-phospho-beta-D-ribosyl)imidazole + ADP + phosphate + H(+). It functions in the pathway purine metabolism; IMP biosynthesis via de novo pathway; 5-amino-1-(5-phospho-D-ribosyl)imidazole from N(2)-formyl-N(1)-(5-phospho-D-ribosyl)glycinamide: step 2/2. This Sinorhizobium fredii (strain NBRC 101917 / NGR234) protein is Phosphoribosylformylglycinamidine cyclo-ligase.